The following is a 207-amino-acid chain: tRNA (pseudouridine(54)-N(1))-methyltransferase (207 aa).

Leu-137 provides a ligand contact to S-adenosyl-L-methionine.

The protein belongs to the methyltransferase superfamily. TrmY family. Homodimer.

It localises to the cytoplasm. The enzyme catalyses pseudouridine(54) in tRNA + S-adenosyl-L-methionine = N(1)-methylpseudouridine(54) in tRNA + S-adenosyl-L-homocysteine + H(+). In terms of biological role, specifically catalyzes the N1-methylation of pseudouridine at position 54 (Psi54) in tRNAs. The sequence is that of tRNA (pseudouridine(54)-N(1))-methyltransferase from Halorubrum lacusprofundi (strain ATCC 49239 / DSM 5036 / JCM 8891 / ACAM 34).